A 566-amino-acid chain; its full sequence is Protein kintoun (566 aa).

Disordered stretches follow at residues 183-298 (KYKG…TAPQ), 399-467 (EEEE…AETG), and 493-552 (QLEE…ESRI). Positions 208 to 290 (PQQTTGPQQP…HQPTDPQQTT (83 aa)) are enriched in low complexity. Residues 399-424 (EEEERRAEEEESRKGGDEDGELHPDC) show a composition bias toward basic and acidic residues. Residues 440-467 (TPAADTHTPAADTHTPAADTHTPAAETG) show a composition bias toward low complexity. Residues 535-550 (DPAHTDPAHTDPEMES) are compositionally biased toward basic and acidic residues.

This sequence belongs to the PIH1 family. Kintoun subfamily.

It localises to the cytoplasm. The protein localises to the dynein axonemal particle. Required for cytoplasmic pre-assembly of axonemal dyneins, thereby playing a central role in motility in cilia and flagella. Involved in pre-assembly of dynein arm complexes in the cytoplasm before intraflagellar transport loads them for the ciliary compartment. The polypeptide is Protein kintoun (Danio rerio (Zebrafish)).